The following is a 59-amino-acid chain: Single-pass membrane and coiled-coil domain-containing protein 4 (59 aa).

The interval 1 to 27 (MRQLKGKPKKETSRDKKERKQAMQEAR) is disordered. Over residues 9–27 (KKETSRDKKERKQAMQEAR) the composition is skewed to basic and acidic residues. The stretch at 9–31 (KKETSRDKKERKQAMQEARRQIT) forms a coiled coil. A helical transmembrane segment spans residues 32–52 (TVVLPTLAVVVLLIVVFVYVA).

Belongs to the SMCO4 family.

Its subcellular location is the membrane. This Bos taurus (Bovine) protein is Single-pass membrane and coiled-coil domain-containing protein 4 (SMCO4).